We begin with the raw amino-acid sequence, 404 residues long: Dihydrolipoyllysine-residue acetyltransferase component of pyruvate dehydrogenase complex (404 aa).

The Lipoyl-binding domain maps to 2-78 (PIKILMPALS…PVNSLIAVLS (77 aa)). Lys43 carries the post-translational modification N6-lipoyllysine. The Peripheral subunit-binding (PSBD) domain occupies 128 to 165 (FASPLAKRLAKIRNIRLESVQGSGPHGRIVKQDILSYS). His377 is a catalytic residue.

The protein belongs to the 2-oxoacid dehydrogenase family. In terms of assembly, forms a 24-polypeptide structural core with octahedral symmetry. (R)-lipoate is required as a cofactor.

It catalyses the reaction N(6)-[(R)-dihydrolipoyl]-L-lysyl-[protein] + acetyl-CoA = N(6)-[(R)-S(8)-acetyldihydrolipoyl]-L-lysyl-[protein] + CoA. Its function is as follows. The pyruvate dehydrogenase complex catalyzes the overall conversion of pyruvate to acetyl-CoA and CO(2). It contains multiple copies of three enzymatic components: pyruvate dehydrogenase (E1), dihydrolipoamide acetyltransferase (E2) and lipoamide dehydrogenase (E3). This chain is Dihydrolipoyllysine-residue acetyltransferase component of pyruvate dehydrogenase complex (pdhC), found in Rickettsia typhi (strain ATCC VR-144 / Wilmington).